The chain runs to 355 residues: Ubiquinone biosynthesis protein COQ4 homolog, mitochondrial (355 aa).

4 residues coordinate Zn(2+): His-134, Asp-135, His-138, and Glu-150.

This sequence belongs to the COQ4 family. Component of a multi-subunit COQ enzyme complex. Zn(2+) serves as cofactor.

The protein localises to the mitochondrion inner membrane. It catalyses the reaction a 4-hydroxy-3-methoxy-5-(all-trans-polyprenyl)benzoate + H(+) = a 2-methoxy-6-(all-trans-polyprenyl)phenol + CO2. It functions in the pathway cofactor biosynthesis; ubiquinone biosynthesis. Its function is as follows. Lyase that catalyzes the C1-decarboxylation of 4-hydroxy-3-methoxy-5-(all-trans-polyprenyl)benzoic acid into 2-methoxy-6-(all-trans-polyprenyl)phenol during ubiquinone biosynthesis. The protein is Ubiquinone biosynthesis protein COQ4 homolog, mitochondrial of Plasmodium yoelii yoelii.